The sequence spans 231 residues: Lipoprotein-releasing system ATP-binding protein LolD (231 aa).

An ABC transporter domain is found at 11 to 231 (LQAEHLGKVY…HMENGRLQPD (221 aa)). 47 to 54 (GASGSGKS) is a binding site for ATP.

Belongs to the ABC transporter superfamily. Lipoprotein translocase (TC 3.A.1.125) family. As to quaternary structure, the complex is composed of two ATP-binding proteins (LolD) and two transmembrane proteins (LolC and LolE).

The protein localises to the cell inner membrane. Part of the ABC transporter complex LolCDE involved in the translocation of mature outer membrane-directed lipoproteins, from the inner membrane to the periplasmic chaperone, LolA. Responsible for the formation of the LolA-lipoprotein complex in an ATP-dependent manner. This chain is Lipoprotein-releasing system ATP-binding protein LolD, found in Bordetella bronchiseptica (strain ATCC BAA-588 / NCTC 13252 / RB50) (Alcaligenes bronchisepticus).